The following is a 402-amino-acid chain: Plasminogen activator inhibitor 1 (402 aa).

The signal sequence occupies residues 1-22 (MQMSSALACLILGLVLVSGKGF). N-linked (GlcNAc...) asparagine glycosylation is found at Asn-232, Asn-288, and Asn-352.

It belongs to the serpin family. As to quaternary structure, forms a heterodimer with TMPRSS7. Interacts with VTN. Binds LRP1B; binding is followed by internalization and degradation. Interacts with PPP1CB. In complex with PLAU/uPA, interacts with PLAUR/uPAR. Interacts with SORL1 and LRP1, either alone or in complex with PLAU; these interactions are abolished in the presence of LRPAP1/RAP. The ternary complex composed of PLAUR-PLAU-PAI1 also interacts with SORL1. Interacts with PLAT/tPA. Also interacts with SORL1, when complexed to PLAT/tPA.

It localises to the secreted. Its function is as follows. Serine protease inhibitor. Inhibits TMPRSS7. Is a primary inhibitor of tissue-type plasminogen activator (PLAT) and urokinase-type plasminogen activator (PLAU). As PLAT inhibitor, it is required for fibrinolysis down-regulation and is responsible for the controlled degradation of blood clots. As PLAU inhibitor, it is involved in the regulation of cell adhesion and spreading. Acts as a regulator of cell migration, independently of its role as protease inhibitor. It is required for stimulation of keratinocyte migration during cutaneous injury repair. Involved in cellular and replicative senescence. Plays a role in alveolar type 2 cells senescence in the lung. Is involved in the regulation of cementogenic differentiation of periodontal ligament stem cells, and regulates odontoblast differentiation and dentin formation during odontogenesis. The protein is Plasminogen activator inhibitor 1 (Serpine1) of Mus musculus (Mouse).